Consider the following 421-residue polypeptide: MNIDQHHQLQQQHQQQMLQQQAQAQAQAQAQAQQQQQQQQQAAAAAAAANAAATTSSSPRQVSFNVSDHYQILEIVGEGAYGIVCSAIHKPSQQKVAIKKIEPFERSMLCLRTLRELKLLKHFNHENIISILAIQRPINYESFNEIYLIQELMETDLHRVIRTQNLSDDHIQYFIYQTLRALKAMHSANVLHRDLKPSNLLLNSNCDLKICDFGLARSIASQEDNYGFMTEYVATRWYRAPEIMLTFQEYTTAIDVWSVGCILAEMLSGRPLFPGRDYHNQLWLIMEVLGTPNMEDYYNIKSKRAREYIRSLPFCKKIPFSELFANTNNNTSTSTSNTGGRTNINPLALDLLEKLLIFNPAKRITVEDALKHPYLQLYHDPNDEPISDKIPEDFFDFDKMKDQLTIEDLKKLLYEEIMKPL.

The Protein kinase domain occupies 70–375; it reads YQILEIVGEG…VEDALKHPYL (306 aa). Residues 76-84 and Lys99 each bind ATP; that span reads VGEGAYGIV. Residue Asp194 is the Proton acceptor of the active site. Phosphothreonine is present on Thr230. The short motif at 230 to 232 is the TXY element; it reads TEY. Tyr232 is subject to Phosphotyrosine.

Belongs to the protein kinase superfamily. CMGC Ser/Thr protein kinase family. MAP kinase subfamily. Mg(2+) is required as a cofactor. Post-translationally, dually phosphorylated on Thr-230 and Tyr-232, which activates the enzyme.

The catalysed reaction is L-seryl-[protein] + ATP = O-phospho-L-seryl-[protein] + ADP + H(+). It catalyses the reaction L-threonyl-[protein] + ATP = O-phospho-L-threonyl-[protein] + ADP + H(+). Its activity is regulated as follows. Activated by tyrosine and threonine phosphorylation. In Candida albicans (strain SC5314 / ATCC MYA-2876) (Yeast), this protein is Extracellular signal-regulated kinase 1 (CEK1).